Reading from the N-terminus, the 111-residue chain is Nucleoid-associated protein CT0805 (111 aa).

Belongs to the YbaB/EbfC family. As to quaternary structure, homodimer.

It is found in the cytoplasm. The protein localises to the nucleoid. Its function is as follows. Binds to DNA and alters its conformation. May be involved in regulation of gene expression, nucleoid organization and DNA protection. This Chlorobaculum tepidum (strain ATCC 49652 / DSM 12025 / NBRC 103806 / TLS) (Chlorobium tepidum) protein is Nucleoid-associated protein CT0805.